A 100-amino-acid chain; its full sequence is Urease subunit gamma (100 aa).

The protein belongs to the urease gamma subunit family. In terms of assembly, heterotrimer of UreA (gamma), UreB (beta) and UreC (alpha) subunits. Three heterotrimers associate to form the active enzyme.

It is found in the cytoplasm. The catalysed reaction is urea + 2 H2O + H(+) = hydrogencarbonate + 2 NH4(+). It participates in nitrogen metabolism; urea degradation; CO(2) and NH(3) from urea (urease route): step 1/1. The polypeptide is Urease subunit gamma (Rhizobium meliloti (strain 1021) (Ensifer meliloti)).